The following is a 390-amino-acid chain: MKFVDEASILVVAGDGGNGCVSFRREKYIPKGGPDGGDGGDGGDVWMEADENLNTLIDYRFEKSFRAERGQNGASRDCTGKRGKDVTIKVPVGTRVIDQGTGETMGDMTKHGQRLLVAKGGWHGLGNTRFKSSVNRTPRQKTNGTPGDKRELLLELMLLADVGMLGMPNAGKSTFIRAVSAAKPKVADYPFTTLVPSLGVVRMDNEKSFVVADIPGLIEGAAEGAGLGIRFLKHLERCRVLLHLIDIDPIDGTDPVENARIIISELEKYSQDLATKPRWLVFNKIDLLDKVEAEEKAKAIAEALGWEDKYYLISAASGLGVKDLCWDVMTFIIENPVVQAEEAKQPEKVEFMWDDYHRQQLEEIAEEDDEDWDDDWDEDDEEGVEFIYKR.

An Obg domain is found at 1–159 (MKFVDEASIL…RELLLELMLL (159 aa)). The interval 127–147 (NTRFKSSVNRTPRQKTNGTPG) is disordered. Residues 129–145 (RFKSSVNRTPRQKTNGT) are compositionally biased toward polar residues. Residues 160-333 (ADVGMLGMPN…LCWDVMTFII (174 aa)) form the OBG-type G domain. GTP contacts are provided by residues 166–173 (GMPNAGKS), 191–195 (FTTLV), 213–216 (DIPG), 283–286 (NKID), and 314–316 (SAA). Mg(2+) is bound by residues Ser173 and Thr193.

This sequence belongs to the TRAFAC class OBG-HflX-like GTPase superfamily. OBG GTPase family. In terms of assembly, monomer. Mg(2+) serves as cofactor.

The protein resides in the cytoplasm. Functionally, an essential GTPase which binds GTP, GDP and possibly (p)ppGpp with moderate affinity, with high nucleotide exchange rates and a fairly low GTP hydrolysis rate. Plays a role in control of the cell cycle, stress response, ribosome biogenesis and in those bacteria that undergo differentiation, in morphogenesis control. The chain is GTPase Obg from Escherichia coli (strain K12 / DH10B).